The primary structure comprises 188 residues: Peptidyl-tRNA hydrolase (188 aa).

Tyrosine 14 serves as a coordination point for tRNA. The active-site Proton acceptor is histidine 19. The tRNA site is built by tyrosine 64, asparagine 66, and asparagine 112.

The protein belongs to the PTH family. Monomer.

The protein localises to the cytoplasm. The catalysed reaction is an N-acyl-L-alpha-aminoacyl-tRNA + H2O = an N-acyl-L-amino acid + a tRNA + H(+). Functionally, hydrolyzes ribosome-free peptidyl-tRNAs (with 1 or more amino acids incorporated), which drop off the ribosome during protein synthesis, or as a result of ribosome stalling. In terms of biological role, catalyzes the release of premature peptidyl moieties from peptidyl-tRNA molecules trapped in stalled 50S ribosomal subunits, and thus maintains levels of free tRNAs and 50S ribosomes. Releases Ala-tailed nascent peptides from stalled 50S ribosomal subunits. Non-templated Ala tailing occurs as part of the ribosome quality control (RQC) pathway. In the absence of Ala tails significantly less peptide release occurs. The Ala tail facilitates the interaction of Pth with the nascent peptide-tRNA ester bond as well as promoting nascent chain degradation; 3 Ala residues suffice to stimulate peptide release from stalled 50S ribosomal subunits. Complements a temperature-sensitive pth mutation in E.coli. The polypeptide is Peptidyl-tRNA hydrolase (Bacillus subtilis (strain 168)).